The primary structure comprises 362 residues: Dihydroorotate dehydrogenase (quinone) (362 aa).

FMN is bound by residues 62 to 66 (AGYDK) and Thr86. Residue Lys66 coordinates substrate. 111 to 115 (NRLGF) contributes to the substrate binding site. Positions 139 and 170 each coordinate FMN. Asn170 lines the substrate pocket. The active-site Nucleophile is Ser173. Residue Asn175 coordinates substrate. FMN is bound by residues Lys215 and Ser243. 244-245 (NT) provides a ligand contact to substrate. Residues Gly266, Gly295, and 316–317 (YS) each bind FMN.

It belongs to the dihydroorotate dehydrogenase family. Type 2 subfamily. In terms of assembly, monomer. FMN serves as cofactor.

The protein resides in the cell membrane. It catalyses the reaction (S)-dihydroorotate + a quinone = orotate + a quinol. It participates in pyrimidine metabolism; UMP biosynthesis via de novo pathway; orotate from (S)-dihydroorotate (quinone route): step 1/1. In terms of biological role, catalyzes the conversion of dihydroorotate to orotate with quinone as electron acceptor. This Rhizobium johnstonii (strain DSM 114642 / LMG 32736 / 3841) (Rhizobium leguminosarum bv. viciae) protein is Dihydroorotate dehydrogenase (quinone).